Here is a 408-residue protein sequence, read N- to C-terminus: Argininosuccinate synthase (408 aa).

ATP contacts are provided by residues 12-20 (AYSGGLDTS) and Ala39. L-citrulline is bound by residues Tyr90 and Ser95. ATP is bound at residue Gly120. L-aspartate-binding residues include Thr122, Asn126, and Asp127. Asn126 lines the L-citrulline pocket. Residues Arg130, Ser181, Ser190, Glu266, and Tyr278 each coordinate L-citrulline.

Belongs to the argininosuccinate synthase family. Type 1 subfamily. In terms of assembly, homotetramer.

The protein localises to the cytoplasm. The catalysed reaction is L-citrulline + L-aspartate + ATP = 2-(N(omega)-L-arginino)succinate + AMP + diphosphate + H(+). It participates in amino-acid biosynthesis; L-arginine biosynthesis; L-arginine from L-ornithine and carbamoyl phosphate: step 2/3. The polypeptide is Argininosuccinate synthase (Methylococcus capsulatus (strain ATCC 33009 / NCIMB 11132 / Bath)).